Consider the following 225-residue polypeptide: Protein-disulfide oxidoreductase DsbI (225 aa).

The helical transmembrane segment at 27–47 (FLWLLMAIAMGGLIILAHSFF) threads the bilayer. An intrachain disulfide couples C56 to C59. 2 helical membrane-spanning segments follow: residues 65–85 (AMFVMVIGGVIAAINPKNIVL) and 87–107 (LIGCIAAFYGSIMGIKFSIKL). C128 and C154 are joined by a disulfide. Residues 199-219 (CMLAFGLCLILLLVMSGAWAL) form a helical membrane-spanning segment.

This sequence belongs to the DsbB family. DsbI subfamily. Interacts with DsbL.

It is found in the cell inner membrane. Its function is as follows. Required for disulfide bond formation in some proteins. Part of a redox system composed of DsbI and DsbL that mediates formation of an essential disulfide bond in AssT. The chain is Protein-disulfide oxidoreductase DsbI from Salmonella choleraesuis (strain SC-B67).